The chain runs to 204 residues: Peptide deformylase (204 aa).

Cys-131 and His-174 together coordinate Fe cation. Glu-175 is an active-site residue. A Fe cation-binding site is contributed by His-178.

The protein belongs to the polypeptide deformylase family. It depends on Fe(2+) as a cofactor.

It carries out the reaction N-terminal N-formyl-L-methionyl-[peptide] + H2O = N-terminal L-methionyl-[peptide] + formate. Its function is as follows. Removes the formyl group from the N-terminal Met of newly synthesized proteins. Requires at least a dipeptide for an efficient rate of reaction. N-terminal L-methionine is a prerequisite for activity but the enzyme has broad specificity at other positions. The sequence is that of Peptide deformylase from Streptococcus equi subsp. zooepidemicus (strain MGCS10565).